We begin with the raw amino-acid sequence, 622 residues long: Kinesin light chain 2 (622 aa).

Positions 78 to 143 form a coiled coil; it reads ILALSSHLGA…KQHLLFMSQI (66 aa). A compositionally biased stretch (basic and acidic residues) spans 145-164; sequence KLDEDASPNEEKGDVPKDTL. Positions 145–191 are disordered; the sequence is KLDEDASPNEEKGDVPKDTLDDLFPNEDEQSPAPSPGGGDVSGQHGG. A phosphoserine mark is found at Ser-151, Ser-175, and Ser-179. Positions 180–190 are enriched in gly residues; sequence PGGGDVSGQHG. TPR repeat units follow at residues 198-231, 240-273, 282-315, 324-357, and 366-399; these read LRTL…LEKT, ATML…REKT, AATL…REKV, AKQL…YATR, and AKTK…AHEK. Ser-445 carries the phosphoserine modification. The stretch at 449–482 is one TPR 6 repeat; sequence NTTLRSLGALYRRQGKLEAAHTLEDCASRNRKQG. Disordered stretches follow at residues 476-548 and 563-622; these read SRNR…SFGK and KLQG…SLVG. The segment covering 493–509 has biased composition (basic and acidic residues); the sequence is ELLKDGSGRRGDRRSSR. Phosphoserine occurs at positions 508 and 521. Low complexity predominate over residues 538–547; the sequence is GSLRRSGSFG. A phosphoserine mark is found at Ser-581, Ser-582, Ser-589, Ser-608, Ser-610, and Ser-615. The span at 601-622 shows a compositional bias: low complexity; sequence LSDSRTLSSSSMDLSRRSSLVG.

The protein belongs to the kinesin light chain family. As to quaternary structure, oligomeric complex composed of two heavy chains and two light chains. Interacts (via TPR repeats) with PLEKHM2.

It localises to the cytoplasm. The protein resides in the cytoskeleton. Its subcellular location is the lysosome membrane. Kinesin is a microtubule-associated force-producing protein that plays a role in organelle transport. The light chain functions in coupling of cargo to the heavy chain or in the modulation of its ATPase activity. Through binding with PLEKHM2 and ARL8B, recruits kinesin-1 to lysosomes and hence direct lysosomes movement toward microtubule plus ends. The sequence is that of Kinesin light chain 2 from Homo sapiens (Human).